A 226-amino-acid chain; its full sequence is Octanoyltransferase (226 aa).

The BPL/LPL catalytic domain maps to 37-220; that stretch reads GTAGELIWLL…SFSKVFGPVE (184 aa). Residues 76 to 83, 151 to 153, and 164 to 166 each bind substrate; these read RGGQFTYH, AIG, and GIS. C182 acts as the Acyl-thioester intermediate in catalysis.

This sequence belongs to the LipB family.

It is found in the cytoplasm. The catalysed reaction is octanoyl-[ACP] + L-lysyl-[protein] = N(6)-octanoyl-L-lysyl-[protein] + holo-[ACP] + H(+). It functions in the pathway protein modification; protein lipoylation via endogenous pathway; protein N(6)-(lipoyl)lysine from octanoyl-[acyl-carrier-protein]: step 1/2. Its function is as follows. Catalyzes the transfer of endogenously produced octanoic acid from octanoyl-acyl-carrier-protein onto the lipoyl domains of lipoate-dependent enzymes. Lipoyl-ACP can also act as a substrate although octanoyl-ACP is likely to be the physiological substrate. The polypeptide is Octanoyltransferase (Caulobacter vibrioides (strain ATCC 19089 / CIP 103742 / CB 15) (Caulobacter crescentus)).